We begin with the raw amino-acid sequence, 293 residues long: Meteorin (293 aa).

An N-terminal signal peptide occupies residues Met-1–Ala-23. Disulfide bonds link Cys-30/Cys-51, Cys-82/Cys-118, Cys-171/Cys-242, Cys-174/Cys-266, and Cys-184/Cys-288.

This sequence belongs to the meteorin family. Monomer.

It localises to the secreted. Its function is as follows. Involved in both glial cell differentiation and axonal network formation during neurogenesis. Promotes astrocyte differentiation and transforms cerebellar astrocytes into radial glia. Also induces axonal extension in small and intermediate neurons of sensory ganglia by activating nearby satellite glia. The protein is Meteorin (METRN) of Homo sapiens (Human).